The chain runs to 253 residues: Sulfate transporter CysZ (253 aa).

The next 4 helical transmembrane spans lie at 31-51 (FVILPLLVNILLMGGAFWWLF), 75-95 (LLWPLAVISVLLVFGYFFSTI), 151-171 (IVLLIIYFIPGIGQTVAPVLW), and 222-242 (IPLLNLFIMPVAVCGATAMWV).

It belongs to the CysZ family.

It localises to the cell inner membrane. In terms of biological role, high affinity, high specificity proton-dependent sulfate transporter, which mediates sulfate uptake. Provides the sulfur source for the cysteine synthesis pathway. This chain is Sulfate transporter CysZ, found in Escherichia coli O139:H28 (strain E24377A / ETEC).